A 419-amino-acid chain; its full sequence is 4-hydroxyphenylpyruvate dioxygenase (419 aa).

2 consecutive VOC domains span residues 37-185 and 216-376; these read GYDH…LLSR and RIDH…LFTR. Fe cation is bound by residues histidine 219, histidine 302, and glutamate 387.

This sequence belongs to the 4HPPD family. Fe cation is required as a cofactor.

The enzyme catalyses 3-(4-hydroxyphenyl)pyruvate + O2 = homogentisate + CO2. The protein operates within amino-acid degradation; L-phenylalanine degradation; acetoacetate and fumarate from L-phenylalanine: step 3/6. The polypeptide is 4-hydroxyphenylpyruvate dioxygenase (HPD4) (Pyricularia oryzae (strain 70-15 / ATCC MYA-4617 / FGSC 8958) (Rice blast fungus)).